We begin with the raw amino-acid sequence, 343 residues long: Lactamase-like protein nscB (343 aa).

The Zn(2+) site is built by H118, H120, D122, and H123. The active-site Proton donor/acceptor is D122.

Belongs to the metallo-beta-lactamase superfamily. The cofactor is Zn(2+).

It functions in the pathway secondary metabolite biosynthesis. In terms of biological role, lactamase-like protein; part of the gene cluster that mediates the biosynthesis of neosartoricin B, a prenylated anthracenone that probably exhibits T-cell antiproliferative activity, suggestive of a physiological role as an immunosuppressive agent. The non-reducing polyketide synthase nscA probably synthesizes and cyclizes the decaketide backbone. The hydrolase nscB then mediates the product release through hydrolysis followed by spontaneous decarboxylation. The prenyltransferase nscD catalyzes the addition of the dimethylallyl group to the aromatic C5. The FAD-dependent monooxygenase nscC is then responsible for the stereospecific hydroxylation at C2. Neosartoricin B can be converted into two additional compounds neosartoricins C and D. Neosartoricin C is a spirocyclic compound that is cyclized through the attack of C3 hydroxyl on C14, followed by dehydration. On the other hand, neosartoricin D is a further cyclized compound in which attack of C2 on C14 in neosartoricin C results in the formation of the acetal-containing dioxabicyclo-octanone ring. Both of these compounds are novel and possibly represent related metabolites of the gene cluster. This is Lactamase-like protein nscB from Arthroderma otae (strain ATCC MYA-4605 / CBS 113480) (Microsporum canis).